Consider the following 90-residue polypeptide: DNA-binding protein HRm (90 aa).

The protein belongs to the bacterial histone-like protein family.

Functionally, histone-like DNA-binding protein which is capable of wrapping DNA to stabilize it, and thus to prevent its denaturation under extreme environmental conditions. This is DNA-binding protein HRm (hupB) from Rhizobium meliloti (strain 1021) (Ensifer meliloti).